Here is a 492-residue protein sequence, read N- to C-terminus: MRKNPLVLGVSASVETNVGRIAQIIGPVLDVSFPPGNMPNIYNSLIVKGQGTAGQEIQVTCEVQQLLGNHKVRAVAMSATDGLTRGMRVIDTGAPLSVPVGGATLGRIFNVLGEPVDNLGPVDAGITSPIHRPAPAFTELDTKLSIFETGIKVVDLLAPYRRGGKIGLFGGAGVGKTVLIMELINNIAKAHGGVSVFGGVGERTREGNDLYMEMKESGVIDEQKISESKVALVYGQMNEPPGARMRVGLTALTMAEYFRDVNEQDVLLFIDNIFRFVQAGSEVSALLGRMPSAVGYQPTLSTEMGSLQERITSTKKGSITSIQAVYVPADDLTDPAPATTFAHSDATTVLSRGLAAKGIYPAVDPLDSTSTMLQPWIVGEEHYETAQGVKQTLQRYKELQDIIAIPGLDELSEEDRLIVARARKIERFLSQPFFVAEVFTGSPGKYVGLMETIRGFQMILSGELDGLIEQSFYLVGNIDEATAKAINSSMES.

170–177 (GGAGVGKT) is an ATP binding site.

Belongs to the ATPase alpha/beta chains family. In terms of assembly, F-type ATPases have 2 components, CF(1) - the catalytic core - and CF(0) - the membrane proton channel. CF(1) has five subunits: alpha(3), beta(3), gamma(1), delta(1), epsilon(1). CF(0) has four main subunits: a(1), b(1), b'(1) and c(9-12).

The protein localises to the plastid. It localises to the chloroplast thylakoid membrane. It catalyses the reaction ATP + H2O + 4 H(+)(in) = ADP + phosphate + 5 H(+)(out). Functionally, produces ATP from ADP in the presence of a proton gradient across the membrane. The catalytic sites are hosted primarily by the beta subunits. This Pinus thunbergii (Japanese black pine) protein is ATP synthase subunit beta, chloroplastic.